The following is a 591-amino-acid chain: Asparagine synthetase [glutamine-hydrolyzing] 2 (591 aa).

Cysteine 2 (for GATase activity) is an active-site residue. Residues 2–185 form the Glutamine amidotransferase type-2 domain; that stretch reads CGILAVLGVA…PGHLYSSKTG (184 aa). L-glutamine is bound by residues 50–54, 75–77, and aspartate 98; these read RLAIV and NGE. In terms of domain architecture, Asparagine synthetase spans 193–516; it reads PPWFSESIPS…PKNAARLTVP (324 aa). ATP contacts are provided by residues leucine 231, isoleucine 267, and 341 to 342; that span reads SG.

As to expression, expressed in companion cells of leaf sheath vascular bundles, and phloem-parenchyma cells, nucellar projections and nucellar epidermis of dorsal vascular bundles of grains.

It carries out the reaction L-aspartate + L-glutamine + ATP + H2O = L-asparagine + L-glutamate + AMP + diphosphate + H(+). It functions in the pathway amino-acid biosynthesis; L-asparagine biosynthesis; L-asparagine from L-aspartate (L-Gln route): step 1/1. In terms of biological role, essential for nitrogen assimilation, distribution and remobilization within the plant via the phloem. The sequence is that of Asparagine synthetase [glutamine-hydrolyzing] 2 from Oryza sativa subsp. japonica (Rice).